A 63-amino-acid polypeptide reads, in one-letter code: Defensin-like protein 278 (63 aa).

A signal peptide spans 1–15; sequence MSLVYMYMYIGVVMS. Cystine bridges form between Cys31–Cys48, Cys37–Cys53, and Cys41–Cys55.

It belongs to the DEFL family.

Its subcellular location is the secreted. This Arabidopsis thaliana (Mouse-ear cress) protein is Defensin-like protein 278.